Here is a 133-residue protein sequence, read N- to C-terminus: MANHDPISDMLTRIRNASEKRHETTKIPASRMTRSIAKVLQQEGFISEISEQGEGIRTELVLALKYSGKHRLPTIRSMQRVSKPGLRIYKNTRGLPKVLGGLGVAIISTSKGVMSDRDARREGVGGEVLCYVY.

Belongs to the universal ribosomal protein uS8 family. Part of the 30S ribosomal subunit. Contacts proteins S5 and S12.

Functionally, one of the primary rRNA binding proteins, it binds directly to 16S rRNA central domain where it helps coordinate assembly of the platform of the 30S subunit. This chain is Small ribosomal subunit protein uS8, found in Synechococcus sp. (strain CC9605).